A 177-amino-acid chain; its full sequence is uncharacterized protein (177 aa).

The N-terminal stretch at 1–22 (MCGVVVVIVALVPADPLLPAFA) is a signal peptide. A run of 3 helical transmembrane segments spans residues 31–51 (VFIPFFNISSSIILICSTCVF), 94–114 (ISLMPSFLFPFATLLCLLKFV), and 136–156 (LFPIMLIPPPFLTSSSFLLEI).

It is found in the membrane. This is an uncharacterized protein from Saccharomyces cerevisiae (strain ATCC 204508 / S288c) (Baker's yeast).